The sequence spans 651 residues: Probable potassium transport system protein Kup (651 aa).

Transmembrane regions (helical) follow at residues 30-50 (LALAALGIVFGDIGTSVLYSL), 71-91 (IISMIFWSILLVVCVKYVIFV), 124-144 (LLLGIVGAGLFYGDSFITPAI), 158-178 (PDAEKIVLPASVVILTLLFIV), 190-210 (FGPVMATWFLTLAALGIPWII), 233-253 (AMAFIAMGAVVLTITGAEALY), 268-288 (WFGLVLPCLLINYLGQGAMIL), 310-330 (LVTIATMATVIASQAVISGAF), 358-378 (IYIPEVNWTLFIGVLALILIF), 387-407 (AYGLAVTGTFLLTTSLFLVLA), 413-433 (WPMWALIFFGVIVGGVELSIF), and 437-457 (LLKIASGGWIPLLFATIVVII).

It belongs to the HAK/KUP transporter (TC 2.A.72) family.

Its subcellular location is the cell membrane. It catalyses the reaction K(+)(in) + H(+)(in) = K(+)(out) + H(+)(out). Its function is as follows. Transport of potassium into the cell. Likely operates as a K(+):H(+) symporter. In Cutibacterium acnes (strain DSM 16379 / KPA171202) (Propionibacterium acnes), this protein is Probable potassium transport system protein Kup.